The following is a 295-amino-acid chain: MATFNPQNEMENQARVQEYKVSTGRGGAGNIHKSMSKPSPVLLPLKSNSKTVANNNNNGSNQEKVPRFAIGRGGAGNIFHDPHLTRSAQQLDSNDNINYNDVINDIDDYISPITSDMVDEGGSNPVTNTRSRISATRSHQSLHATTSSPNNNAPIVVGRGGAGNIFFNKKKVASNGGNEEDEIRGGNIEDEDTINANEDNLFVVTSNGNALAAIKSTSKKPKNKLKGKSAPEKFAIGRGGAGNIISPKSSRNTINHNLNDDDEDKFNLKDDNGKEKKKKKKKKSGFFSSLKTMFN.

Alanine 2 is subject to N-acetylalanine. Residues serine 36, serine 39, serine 47, serine 123, serine 138, serine 141, and serine 147 each carry the phosphoserine modification. Residues 134-153 (SATRSHQSLHATTSSPNNNA) show a composition bias toward polar residues. Disordered regions lie at residues 134 to 156 (SATR…APIV) and 217 to 295 (TSKK…TMFN). The span at 217 to 227 (TSKKPKNKLKG) shows a compositional bias: basic residues. A Phosphoserine modification is found at serine 246. Residues 246–256 (SPKSSRNTINH) show a composition bias toward polar residues. Basic and acidic residues predominate over residues 265–274 (KFNLKDDNGK). Basic residues predominate over residues 275–284 (EKKKKKKKKS). Over residues 285–295 (GFFSSLKTMFN) the composition is skewed to low complexity.

Hyperphosphorylated after treatment with rapamycin in a TAP42-dependent manner.

It is found in the cytoplasm. Its function is as follows. Involved in resistance to cisplatin. The chain is Protein PAR32 (PAR32) from Saccharomyces cerevisiae (strain ATCC 204508 / S288c) (Baker's yeast).